The sequence spans 132 residues: UPF0299 membrane protein YohJ (132 aa).

Over Met1–Asn6 the chain is Periplasmic. The helical transmembrane segment at Ile7 to Phe27 threads the bilayer. At Ile28–Ser30 the chain is on the cytoplasmic side. The helical transmembrane segment at Leu31–Ala51 threads the bilayer. The Periplasmic portion of the chain corresponds to Leu52–Pro62. The helical transmembrane segment at Gly63 to Met83 threads the bilayer. The Cytoplasmic segment spans residues Gln84–Gln92. The chain crosses the membrane as a helical span at residues Phe93–Trp113. Over Ser114–Glu132 the chain is Periplasmic.

It belongs to the UPF0299 family.

It localises to the cell inner membrane. The sequence is that of UPF0299 membrane protein YohJ (yohJ) from Escherichia coli O157:H7.